A 921-amino-acid polypeptide reads, in one-letter code: Guanylate kinase-associated protein mars (921 aa).

Serine 49 bears the Phosphoserine mark. Residue threonine 51 is modified to Phosphothreonine. Phosphoserine occurs at positions 76 and 170. Tyrosine 172 is subject to Phosphotyrosine. Disordered stretches follow at residues 179–208 and 273–325; these read GKGK…TVAA and RPTP…PLGN. Composition is skewed to low complexity over residues 193 to 208 and 273 to 285; these read KPTS…TVAA and RPTP…AKTP. At serine 444 the chain carries Phosphoserine. The disordered stretch occupies residues 500 to 531; the sequence is QTTVKEDTGDSTLVPEGTKTPPRRESNGMPNY. A Phosphothreonine modification is found at threonine 519. Position 554 is a phosphoserine (serine 554). 2 disordered regions span residues 641 to 660 and 743 to 763; these read AGAT…SKPV and TKVE…RHSS. A phosphoserine mark is found at serine 785 and serine 792. 2 disordered regions span residues 809–833 and 861–921; these read QNAA…TKRQ and ETVG…SEFM. Threonine 826 is modified (phosphothreonine). Polar residues predominate over residues 878-907; sequence EASTESGSLEQNPGRDSNQENEATPRTYTL.

Belongs to the SAPAP family. In terms of tissue distribution, expressed in the central nervous system and at different stages of gametogenesis. In embryos, it is expressed in central nervous system and brain. In testis, it is strongly expressed in pre-meiotic germ cells, but is not found in somatic or post-meiotic cells.

The protein resides in the cell membrane. Its subcellular location is the nucleus. It is found in the nucleoplasm. It localises to the cytoplasm. The protein localises to the cytoskeleton. The protein resides in the spindle. Functionally, cell cycle regulator. The protein is Guanylate kinase-associated protein mars (mars) of Drosophila melanogaster (Fruit fly).